We begin with the raw amino-acid sequence, 449 residues long: Glucose-6-phosphate isomerase (449 aa).

Residue Glu-291 is the Proton donor of the active site. Active-site residues include His-312 and Lys-426.

Belongs to the GPI family.

The protein localises to the cytoplasm. The catalysed reaction is alpha-D-glucose 6-phosphate = beta-D-fructose 6-phosphate. It functions in the pathway carbohydrate biosynthesis; gluconeogenesis. Its pathway is carbohydrate degradation; glycolysis; D-glyceraldehyde 3-phosphate and glycerone phosphate from D-glucose: step 2/4. Its function is as follows. Catalyzes the reversible isomerization of glucose-6-phosphate to fructose-6-phosphate. In Streptococcus pyogenes serotype M4 (strain MGAS10750), this protein is Glucose-6-phosphate isomerase.